A 387-amino-acid polypeptide reads, in one-letter code: Succinate--CoA ligase [ADP-forming] subunit beta (387 aa).

In terms of domain architecture, ATP-grasp spans 9-245 (KDLLESYGLK…KSQENAKELK (237 aa)). ATP-binding positions include Lys-46, 53–55 (GRG), Glu-100, Tyr-103, and Glu-108. Mg(2+) is bound by residues Asn-200 and Asp-214. Residues Asn-265 and 322-324 (GIV) each bind substrate.

It belongs to the succinate/malate CoA ligase beta subunit family. As to quaternary structure, heterotetramer of two alpha and two beta subunits. It depends on Mg(2+) as a cofactor.

The enzyme catalyses succinate + ATP + CoA = succinyl-CoA + ADP + phosphate. It carries out the reaction GTP + succinate + CoA = succinyl-CoA + GDP + phosphate. It functions in the pathway carbohydrate metabolism; tricarboxylic acid cycle; succinate from succinyl-CoA (ligase route): step 1/1. In terms of biological role, succinyl-CoA synthetase functions in the citric acid cycle (TCA), coupling the hydrolysis of succinyl-CoA to the synthesis of either ATP or GTP and thus represents the only step of substrate-level phosphorylation in the TCA. The beta subunit provides nucleotide specificity of the enzyme and binds the substrate succinate, while the binding sites for coenzyme A and phosphate are found in the alpha subunit. The sequence is that of Succinate--CoA ligase [ADP-forming] subunit beta from Francisella tularensis subsp. novicida (strain U112).